The following is a 276-amino-acid chain: Large ribosomal subunit protein uL2 (276 aa).

Disordered regions lie at residues 38-59 and 225-276; these read FQKSGRNNNGHITTRHKGGGHK and VMNP…RHKR. The span at 39–49 shows a compositional bias: polar residues; the sequence is QKSGRNNNGHI. Basic residues predominate over residues 50–59; the sequence is TTRHKGGGHK.

This sequence belongs to the universal ribosomal protein uL2 family. As to quaternary structure, part of the 50S ribosomal subunit. Forms a bridge to the 30S subunit in the 70S ribosome.

One of the primary rRNA binding proteins. Required for association of the 30S and 50S subunits to form the 70S ribosome, for tRNA binding and peptide bond formation. It has been suggested to have peptidyltransferase activity; this is somewhat controversial. Makes several contacts with the 16S rRNA in the 70S ribosome. The polypeptide is Large ribosomal subunit protein uL2 (Cupriavidus necator (strain ATCC 17699 / DSM 428 / KCTC 22496 / NCIMB 10442 / H16 / Stanier 337) (Ralstonia eutropha)).